The chain runs to 228 residues: 7-cyano-7-deazaguanine synthase (228 aa).

Residue 13-23 (LSGGMDSTLSS) coordinates ATP. 4 residues coordinate Zn(2+): Cys-192, Cys-200, Cys-203, and Cys-206.

The protein belongs to the QueC family. Requires Zn(2+) as cofactor.

It catalyses the reaction 7-carboxy-7-deazaguanine + NH4(+) + ATP = 7-cyano-7-deazaguanine + ADP + phosphate + H2O + H(+). Its pathway is purine metabolism; 7-cyano-7-deazaguanine biosynthesis. Catalyzes the ATP-dependent conversion of 7-carboxy-7-deazaguanine (CDG) to 7-cyano-7-deazaguanine (preQ(0)). This is 7-cyano-7-deazaguanine synthase from Aliarcobacter butzleri (strain RM4018) (Arcobacter butzleri).